Here is a 675-residue protein sequence, read N- to C-terminus: INO80 complex subunit D (675 aa).

Disordered regions lie at residues Met1–Gln39, Thr183–Pro203, Leu274–Val324, Asp473–Lys523, and Val627–Ser675. Composition is skewed to low complexity over residues Gln282–Ile318, Asn482–Asn519, and Asn634–Ser648. A compositionally biased stretch (basic and acidic residues) spans Glu664–Ser675.

This sequence belongs to the INO80D family. As to quaternary structure, component of the chromatin-remodeling INO80 complex.

It is found in the nucleus. Functionally, putative regulatory component of the chromatin remodeling INO80 complex which is involved in transcriptional regulation, DNA replication and probably DNA repair. This chain is INO80 complex subunit D, found in Dictyostelium discoideum (Social amoeba).